Reading from the N-terminus, the 546-residue chain is Phosphatidylinositol 4-phosphate 5-kinase type-1 alpha (546 aa).

The region spanning 65–433 is the PIPK domain; that stretch reads TSSALKGAIQ…RFQRFMCNTV (369 aa). Lys87 is covalently cross-linked (Glycyl lysine isopeptide (Lys-Gly) (interchain with G-Cter in ubiquitin)). The disordered stretch occupies residues 441–522; sequence PSPTKKFRSG…PGPSFSPAVG (82 aa). Residues 449-461 are compositionally biased toward low complexity; the sequence is SGPSFSRRSGPSG. The span at 462–471 shows a compositional bias: polar residues; sequence NSCTPSQPTA. Positions 473-493 are enriched in basic and acidic residues; the sequence is GEHKAQVTTKAEVEPDIHLGR.

In terms of assembly, interacts with RAC1. Interacts with TUT1. Forms a complex with CDH1/E-cadherin, CTNNB1/beta-catenin and CTNND1 at the plasma membrane upon calcium stimulation. Found in a ternary complex with IRS1 and DGKZ in the absence of insulin stimulation. Interacts with DGKZ. Interacts with PIP4K2C; the interaction inhibits PIP5K1A kinase activity.

It is found in the cell membrane. The protein localises to the cytoplasm. Its subcellular location is the nucleus. It localises to the nucleus speckle. The protein resides in the cell projection. It is found in the ruffle. The protein localises to the lamellipodium. It carries out the reaction a 1,2-diacyl-sn-glycero-3-phospho-(1D-myo-inositol 4-phosphate) + ATP = a 1,2-diacyl-sn-glycero-3-phospho-(1D-myo-inositol-4,5-bisphosphate) + ADP + H(+). It catalyses the reaction 1-octadecanoyl-2-(5Z,8Z,11Z,14Z)-eicosatetraenoyl-sn-glycero-3-phospho-1D-myo-inositol 4-phosphate + ATP = 1-octadecanoyl-2-(5Z,8Z,11Z,14Z)-eicosatetraenoyl-sn-glycero-3-phospho-1D-myo-inositol 4,5-bisphosphate + ADP + H(+). The catalysed reaction is 1,2-dihexadecanoyl-sn-glycero-3-phospho-(1D-myo-inositol-4-phosphate) + ATP = 1,2-dihexadecanoyl-sn-glycero-3-phospho-(1D-myo-inositol-4,5-bisphosphate) + ADP + H(+). The enzyme catalyses 1-octadecanoyl-2-(9Z)-octadecenoyl-sn-glycero-3-phospho-1D-myo-inositol 4-phosphate + ATP = 1-octadecanoyl-2-(9Z)-octadecenoyl-sn-glycero-3-phospho-1D-myo-inositol 4,5-bisphosphate + ADP + H(+). It carries out the reaction 1-octadecanoyl-2-(9Z)-octadecenoyl-sn-glycero-3-phospho-1D-myo-inositol + ATP = 1-octadecanoyl-2-(9Z)-octadecenoyl-sn-glycero-3-phospho-1D-myo-inositol 5-phosphate + ADP + H(+). It catalyses the reaction 1-octadecanoyl-2-(9Z,12Z)-octadecadienoyl-sn-glycero-3-phospho-1D-myo-inositol + ATP = 1-octadecanoyl-2-(9Z,12Z)-octadecadienoyl-sn-glycero-3-phospho-1D-myo-inositol 5-phosphate + ADP + H(+). The catalysed reaction is 1-octadecanoyl-2-(5Z,8Z,11Z,14Z-eicosatetraenoyl)-sn-glycero-3-phospho-(1D-myo-inositol) + ATP = 1-octadecanoyl-2-(5Z,8Z,11Z,14Z)-eicosatetraenoyl-sn-glycero-3-phospho-1D-myo-inositol 5-phosphate + ADP + H(+). The enzyme catalyses 1,2-di-(9Z,12Z)-octadecadienoyl-sn-glycero-3-phospho-1D-myo-inositol + ATP = 1,2-di(9Z,12Z)-octadecadienoyl-sn-glycero-3-phospho-1D-myo-inositol 5-phosphate + ADP + H(+). Functionally, catalyzes the phosphorylation of phosphatidylinositol 4-phosphate (PtdIns(4)P/PI4P) to form phosphatidylinositol 4,5-bisphosphate (PtdIns(4,5)P2/PIP2), a lipid second messenger that regulates several cellular processes such as signal transduction, vesicle trafficking, actin cytoskeleton dynamics, cell adhesion, and cell motility. PtdIns(4,5)P2 can directly act as a second messenger or can be utilized as a precursor to generate other second messengers: inositol 1,4,5-trisphosphate (IP3), diacylglycerol (DAG) or phosphatidylinositol-3,4,5-trisphosphate (PtdIns(3,4,5)P3/PIP3). PIP5K1A-mediated phosphorylation of PtdIns(4)P is the predominant pathway for PtdIns(4,5)P2 synthesis. Can also use phosphatidylinositol (PtdIns) as substrate in vitro. Together with PIP5K1C, is required for phagocytosis, both enzymes regulating different types of actin remodeling at sequential steps. Promotes particle ingestion by activating the WAS GTPase-binding protein that induces Arp2/3 dependent actin polymerization at the nascent phagocytic cup. Together with PIP5K1B, is required, after stimulation by G-protein coupled receptors, for the synthesis of IP3 that will induce stable platelet adhesion. Recruited to the plasma membrane by the E-cadherin/beta-catenin complex where it provides the substrate PtdIns(4,5)P2 for the production of PtdIns(3,4,5)P3, IP3 and DAG, that will mobilize internal calcium and drive keratinocyte differentiation. Positively regulates insulin-induced translocation of SLC2A4 to the cell membrane in adipocytes. Together with PIP5K1C has a role during embryogenesis. Independently of its catalytic activity, is required for membrane ruffling formation, actin organization and focal adhesion formation during directional cell migration by controlling integrin-induced translocation of the small GTPase RAC1 to the plasma membrane. Also functions in the nucleus where it acts as an activator of TUT1 adenylyltransferase activity in nuclear speckles, thereby regulating mRNA polyadenylation of a select set of mRNAs. This Rattus norvegicus (Rat) protein is Phosphatidylinositol 4-phosphate 5-kinase type-1 alpha.